The primary structure comprises 163 residues: MGKSCKVVICGQHGVGKTSILEQLLYGNHVVGSDMIETQEDIYIGSVETDRGVREQVRFYDTRGLKDGLELPKHCFCGTDGYVLVYSVDNKDSFKRVEALKKEIDRSKDKKEVTIVVLGNKSDMKDQRRVDHEAAQQWAKAEKILLRNGPTHGSANWNLHPDH.

The interval 1 to 163 (MGKSCKVVIC…SANWNLHPDH (163 aa)) is small GTPase-like. 11–18 (GQHGVGKT) lines the GTP pocket. The Effector region signature appears at 35-43 (MIETQEDIY). Residues 61 to 65 (DTRGL) and 120 to 123 (NKSD) contribute to the GTP site.

It belongs to the small GTPase superfamily. Ras family. KappaB-Ras subfamily.

The protein localises to the cytoplasm. Functionally, atypical Ras-like protein that acts as a potent regulator of NF-kappa-B activity by preventing the degradation of NF-kappa-B inhibitor beta (NFKBIB) by most signals, explaining why NFKBIB is more resistant to degradation. This Xenopus laevis (African clawed frog) protein is NF-kappa-B inhibitor-interacting Ras-like protein 2 (nkiras2).